A 297-amino-acid chain; its full sequence is UDP-N-acetylenolpyruvoylglucosamine reductase (297 aa).

The 174-residue stretch at 22–195 (RAGGTARYYA…LAGRFRLQRG (174 aa)) folds into the FAD-binding PCMH-type domain. R169 is an active-site residue. The active-site Proton donor is S223. E293 is a catalytic residue.

This sequence belongs to the MurB family. FAD serves as cofactor.

It localises to the cytoplasm. It catalyses the reaction UDP-N-acetyl-alpha-D-muramate + NADP(+) = UDP-N-acetyl-3-O-(1-carboxyvinyl)-alpha-D-glucosamine + NADPH + H(+). The protein operates within cell wall biogenesis; peptidoglycan biosynthesis. In terms of biological role, cell wall formation. The sequence is that of UDP-N-acetylenolpyruvoylglucosamine reductase from Chloroflexus aurantiacus (strain ATCC 29364 / DSM 637 / Y-400-fl).